Consider the following 94-residue polypeptide: Nucleoid-associated protein MYPE8070 (94 aa).

This sequence belongs to the YbaB/EbfC family. As to quaternary structure, homodimer.

Its subcellular location is the cytoplasm. It is found in the nucleoid. Its function is as follows. Binds to DNA and alters its conformation. May be involved in regulation of gene expression, nucleoid organization and DNA protection. The sequence is that of Nucleoid-associated protein MYPE8070 from Malacoplasma penetrans (strain HF-2) (Mycoplasma penetrans).